A 226-amino-acid chain; its full sequence is Phosphoribosylformylglycinamidine synthase subunit PurQ (226 aa).

Positions 2–225 constitute a Glutamine amidotransferase type-1 domain; sequence RFGIVVFPGS…MHYLEGGKNN (224 aa). Cys86 serves as the catalytic Nucleophile. Catalysis depends on residues His194 and Glu196.

In terms of assembly, part of the FGAM synthase complex composed of 1 PurL, 1 PurQ and 2 PurS subunits.

It localises to the cytoplasm. The catalysed reaction is N(2)-formyl-N(1)-(5-phospho-beta-D-ribosyl)glycinamide + L-glutamine + ATP + H2O = 2-formamido-N(1)-(5-O-phospho-beta-D-ribosyl)acetamidine + L-glutamate + ADP + phosphate + H(+). It catalyses the reaction L-glutamine + H2O = L-glutamate + NH4(+). It functions in the pathway purine metabolism; IMP biosynthesis via de novo pathway; 5-amino-1-(5-phospho-D-ribosyl)imidazole from N(2)-formyl-N(1)-(5-phospho-D-ribosyl)glycinamide: step 1/2. Its function is as follows. Part of the phosphoribosylformylglycinamidine synthase complex involved in the purines biosynthetic pathway. Catalyzes the ATP-dependent conversion of formylglycinamide ribonucleotide (FGAR) and glutamine to yield formylglycinamidine ribonucleotide (FGAM) and glutamate. The FGAM synthase complex is composed of three subunits. PurQ produces an ammonia molecule by converting glutamine to glutamate. PurL transfers the ammonia molecule to FGAR to form FGAM in an ATP-dependent manner. PurS interacts with PurQ and PurL and is thought to assist in the transfer of the ammonia molecule from PurQ to PurL. The sequence is that of Phosphoribosylformylglycinamidine synthase subunit PurQ from Alkaliphilus metalliredigens (strain QYMF).